Here is a 407-residue protein sequence, read N- to C-terminus: Imidazolonepropionase (407 aa).

H68 and H70 together coordinate Fe(3+). Positions 68 and 70 each coordinate Zn(2+). 4-imidazolone-5-propanoate is bound by residues R77, Y140, and H173. Position 140 (Y140) interacts with N-formimidoyl-L-glutamate. H236 contributes to the Fe(3+) binding site. H236 is a binding site for Zn(2+). Q239 is a 4-imidazolone-5-propanoate binding site. Fe(3+) is bound at residue D311. D311 is a binding site for Zn(2+). The N-formimidoyl-L-glutamate site is built by N313 and G315. T316 contributes to the 4-imidazolone-5-propanoate binding site.

It belongs to the metallo-dependent hydrolases superfamily. HutI family. Requires Zn(2+) as cofactor. Fe(3+) is required as a cofactor.

Its subcellular location is the cytoplasm. The catalysed reaction is 4-imidazolone-5-propanoate + H2O = N-formimidoyl-L-glutamate. It functions in the pathway amino-acid degradation; L-histidine degradation into L-glutamate; N-formimidoyl-L-glutamate from L-histidine: step 3/3. Functionally, catalyzes the hydrolytic cleavage of the carbon-nitrogen bond in imidazolone-5-propanoate to yield N-formimidoyl-L-glutamate. It is the third step in the universal histidine degradation pathway. The protein is Imidazolonepropionase of Stenotrophomonas maltophilia (strain R551-3).